A 374-amino-acid chain; its full sequence is 2,7-anhydro-N-acetylneuraminate hydratase (374 aa).

NAD(+)-binding residues include Y13, F14, D35, N38, T70, N72, H75, E92, K93, W162, and K163.

This sequence belongs to the Gfo/Idh/MocA family. Homodimer. Requires NAD(+) as cofactor.

The catalysed reaction is N-acetyl-2,7-anhydro-alpha-neuraminate + H2O = N-acetyl-alpha-neuraminate. With respect to regulation, neu5Ac is produced in the presence of NAD(+) or NADH, but not in the presence of FAD. Its function is as follows. Hydratase involved in the degradation of sialic acids, which are present in the host mucus layer and represent a much-coveted source of nutrients for R.gnavus, a prevalent member of the normal gut microbiota. Catalyzes the reversible conversion of the dehydrated form of N-acetylneuraminate (Neu5Ac), 2,7-anhydro-N-acetylneuraminate (2,7-AN), to Neu5Ac, allowing growth on 2,7-AN produced by the IT-sialidase NanH. Acts through a multistep mechanism involving a keto intermediate and cycling of NADH/NAD(+). This chain is 2,7-anhydro-N-acetylneuraminate hydratase, found in Mediterraneibacter gnavus (strain ATCC 29149 / DSM 114966 / JCM 6515 / VPI C7-9) (Ruminococcus gnavus).